A 142-amino-acid chain; its full sequence is Large ribosomal subunit protein uL13 (142 aa).

The protein belongs to the universal ribosomal protein uL13 family. Part of the 50S ribosomal subunit.

This protein is one of the early assembly proteins of the 50S ribosomal subunit, although it is not seen to bind rRNA by itself. It is important during the early stages of 50S assembly. The chain is Large ribosomal subunit protein uL13 from Caldicellulosiruptor bescii (strain ATCC BAA-1888 / DSM 6725 / KCTC 15123 / Z-1320) (Anaerocellum thermophilum).